Consider the following 277-residue polypeptide: DNA-binding transcriptional activator MhpR (277 aa).

In terms of domain architecture, HTH iclR-type spans 12 to 74 (VRGLTRGLML…PSDDSFRLTI (63 aa)). The segment at residues 34-53 (VGLLAELSGLHRTTVRRLLE) is a DNA-binding region (H-T-H motif). The region spanning 89–262 (ISALAAPLLG…AKQIEEGVES (174 aa)) is the IclR-ED domain.

Its function is as follows. Activator of the mhpABCDFE operon coding for components of the 3-hydroxyphenylpropionate degradation pathway. The polypeptide is DNA-binding transcriptional activator MhpR (mhpR) (Escherichia coli (strain K12)).